The sequence spans 117 residues: uncharacterized protein (117 aa).

Helical transmembrane passes span 3–23, 40–60, 66–86, and 94–114; these read AVPI…NILL, FLTP…LLFA, LEVS…LIIA, and PFHL…IFLA.

To E.coli and S.aureus ethidium bromide resistance proteins (ebr/QacC/EmrE/MvrC).

The protein localises to the cell membrane. This is an uncharacterized protein from Sinorhizobium fredii (strain NBRC 101917 / NGR234).